A 278-amino-acid chain; its full sequence is HAUS augmin-like complex subunit 1 (278 aa).

Coiled coils occupy residues 49-79 (RDVYLVIEDLKQKASEYESEAKYLQDLLMES), 124-177 (SDLF…KVDN), and 249-277 (SLAQVKIEEAKRELDSIEAELTRRVDMME).

The protein belongs to the HAUS1 family. In terms of assembly, component of the HAUS augmin-like complex. The complex interacts with the gamma-tubulin ring complex and this interaction is required for spindle assembly. Associates with microtubules. The interaction with microtubules is strong during mitosis, while it is weak or absent during interphase. It is unclear whether this interaction is direct or indirect. Interacts with EML3 (phosphorylated at 'Thr-881'). In terms of tissue distribution, widely expressed. Expressed in pancreas, kidney, skeletal muscle, liver and heart. Weakly expressed in lung, brain and placenta.

Its subcellular location is the cytoplasm. It is found in the cytoskeleton. It localises to the microtubule organizing center. The protein localises to the centrosome. The protein resides in the spindle. Its subcellular location is the spindle pole. In terms of biological role, contributes to mitotic spindle assembly, maintenance of centrosome integrity and completion of cytokinesis as part of the HAUS augmin-like complex. This chain is HAUS augmin-like complex subunit 1 (HAUS1), found in Homo sapiens (Human).